The chain runs to 334 residues: Ornithine carbamoyltransferase (334 aa).

Residues 57-60 (STRT), Gln-84, Arg-108, and 135-138 (HPTQ) contribute to the carbamoyl phosphate site. L-ornithine is bound by residues Asn-168, Asp-233, and 237–238 (SM). Carbamoyl phosphate contacts are provided by residues 275-276 (CL) and Arg-320.

This sequence belongs to the aspartate/ornithine carbamoyltransferase superfamily. OTCase family.

It is found in the cytoplasm. The enzyme catalyses carbamoyl phosphate + L-ornithine = L-citrulline + phosphate + H(+). The protein operates within amino-acid biosynthesis; L-arginine biosynthesis; L-arginine from L-ornithine and carbamoyl phosphate: step 1/3. Its function is as follows. Reversibly catalyzes the transfer of the carbamoyl group from carbamoyl phosphate (CP) to the N(epsilon) atom of ornithine (ORN) to produce L-citrulline. The protein is Ornithine carbamoyltransferase of Thermobifida fusca (strain YX).